Reading from the N-terminus, the 189-residue chain is Chitin synthase 2 (189 aa).

Belongs to the chitin synthase family. Class II subfamily.

The protein localises to the cell membrane. The catalysed reaction is [(1-&gt;4)-N-acetyl-beta-D-glucosaminyl](n) + UDP-N-acetyl-alpha-D-glucosamine = [(1-&gt;4)-N-acetyl-beta-D-glucosaminyl](n+1) + UDP + H(+). Its function is as follows. Polymerizes chitin, a structural polymer of the cell wall and septum, by transferring the sugar moiety of UDP-GlcNAc to the non-reducing end of the growing chitin polymer. The sequence is that of Chitin synthase 2 (CHS2) from Ajellomyces dermatitidis (Blastomyces dermatitidis).